The sequence spans 504 residues: Probable cytosol aminopeptidase (504 aa).

Mn(2+)-binding residues include K272 and D277. K284 is a catalytic residue. The Mn(2+) site is built by D295, D354, and E356. The active site involves R358.

Belongs to the peptidase M17 family. Requires Mn(2+) as cofactor.

Its subcellular location is the cytoplasm. The catalysed reaction is Release of an N-terminal amino acid, Xaa-|-Yaa-, in which Xaa is preferably Leu, but may be other amino acids including Pro although not Arg or Lys, and Yaa may be Pro. Amino acid amides and methyl esters are also readily hydrolyzed, but rates on arylamides are exceedingly low.. It catalyses the reaction Release of an N-terminal amino acid, preferentially leucine, but not glutamic or aspartic acids.. In terms of biological role, presumably involved in the processing and regular turnover of intracellular proteins. Catalyzes the removal of unsubstituted N-terminal amino acids from various peptides. This is Probable cytosol aminopeptidase from Chlorobaculum tepidum (strain ATCC 49652 / DSM 12025 / NBRC 103806 / TLS) (Chlorobium tepidum).